Reading from the N-terminus, the 279-residue chain is Zinc-finger homeodomain protein 1 (279 aa).

Acidic residues predominate over residues 1–13 (MDFDDHDDGDEEM). The interval 1-47 (MDFDDHDDGDEEMPPMPVSSSYETPPQHGLAGGGMAPKPPGEIGSHV) is disordered. A ZF-HD dimerization-type; degenerate zinc finger spans residues 57–106 (YRECLKNHAVGIGGHAVDGCGEFMAAGEEGTIDALRCAACNCHRNFHRKE). A disordered region spans residues 157-191 (AAAAAAGGHPQRPLALPSTSHSGRDDGDDLSGMVG). Positions 215–278 (KKRFRTKFTQ…NNKHTLGKKL (64 aa)) form a DNA-binding region, homeobox.

Homo- and heterodimer with other ZFHD proteins.

The protein resides in the nucleus. Its function is as follows. Putative transcription factor. This chain is Zinc-finger homeodomain protein 1 (ZHD1), found in Oryza sativa subsp. indica (Rice).